Consider the following 261-residue polypeptide: UPF0328 protein ECU03_1620 (261 aa).

This sequence belongs to the UPF0328 family.

The protein is UPF0328 protein ECU03_1620 of Encephalitozoon cuniculi (strain GB-M1) (Microsporidian parasite).